Consider the following 307-residue polypeptide: Putative S-adenosyl-L-methionine-dependent methyltransferase MMAR_4570 (307 aa).

S-adenosyl-L-methionine-binding positions include Asp-128 and 157–158; that span reads DL.

It belongs to the UPF0677 family.

Functionally, exhibits S-adenosyl-L-methionine-dependent methyltransferase activity. The chain is Putative S-adenosyl-L-methionine-dependent methyltransferase MMAR_4570 from Mycobacterium marinum (strain ATCC BAA-535 / M).